The sequence spans 457 residues: Siroheme synthase (457 aa).

The segment at 1–204 (MDHLPIFCQL…ADEKAVNATT (204 aa)) is precorrin-2 dehydrogenase /sirohydrochlorin ferrochelatase. Residues 22-23 (DV) and 43-44 (LN) contribute to the NAD(+) site. Ser-128 carries the phosphoserine modification. The tract at residues 216–457 (GEVVLVGAGP…RDKLNWFSNH (242 aa)) is uroporphyrinogen-III C-methyltransferase. Pro-225 lines the S-adenosyl-L-methionine pocket. Asp-248 serves as the catalytic Proton acceptor. The active-site Proton donor is Lys-270. S-adenosyl-L-methionine is bound by residues 301-303 (GGD), Ile-306, 331-332 (TA), Met-382, and Gly-411.

This sequence in the N-terminal section; belongs to the precorrin-2 dehydrogenase / sirohydrochlorin ferrochelatase family. The protein in the C-terminal section; belongs to the precorrin methyltransferase family.

It carries out the reaction uroporphyrinogen III + 2 S-adenosyl-L-methionine = precorrin-2 + 2 S-adenosyl-L-homocysteine + H(+). The catalysed reaction is precorrin-2 + NAD(+) = sirohydrochlorin + NADH + 2 H(+). It catalyses the reaction siroheme + 2 H(+) = sirohydrochlorin + Fe(2+). The protein operates within cofactor biosynthesis; adenosylcobalamin biosynthesis; precorrin-2 from uroporphyrinogen III: step 1/1. It participates in cofactor biosynthesis; adenosylcobalamin biosynthesis; sirohydrochlorin from precorrin-2: step 1/1. It functions in the pathway porphyrin-containing compound metabolism; siroheme biosynthesis; precorrin-2 from uroporphyrinogen III: step 1/1. Its pathway is porphyrin-containing compound metabolism; siroheme biosynthesis; siroheme from sirohydrochlorin: step 1/1. The protein operates within porphyrin-containing compound metabolism; siroheme biosynthesis; sirohydrochlorin from precorrin-2: step 1/1. In terms of biological role, multifunctional enzyme that catalyzes the SAM-dependent methylations of uroporphyrinogen III at position C-2 and C-7 to form precorrin-2 via precorrin-1. Then it catalyzes the NAD-dependent ring dehydrogenation of precorrin-2 to yield sirohydrochlorin. Finally, it catalyzes the ferrochelation of sirohydrochlorin to yield siroheme. This is Siroheme synthase from Salmonella paratyphi A (strain ATCC 9150 / SARB42).